The sequence spans 179 residues: UPF0303 protein P4H10.12 (179 aa).

Belongs to the UPF0303 family.

This Schizosaccharomyces pombe (strain 972 / ATCC 24843) (Fission yeast) protein is UPF0303 protein P4H10.12.